We begin with the raw amino-acid sequence, 476 residues long: Cysteine--tRNA ligase (476 aa).

Cys-28 contacts Zn(2+). The 'HIGH' region signature appears at 30–40 (PTVYDHTHLGH). Zn(2+)-binding residues include Cys-208, His-233, and Glu-237. A 'KMSKS' region motif is present at residues 265–269 (KMSKS). Lys-268 contacts ATP.

It belongs to the class-I aminoacyl-tRNA synthetase family. It depends on Zn(2+) as a cofactor.

It localises to the cytoplasm. It carries out the reaction tRNA(Cys) + L-cysteine + ATP = L-cysteinyl-tRNA(Cys) + AMP + diphosphate. The polypeptide is Cysteine--tRNA ligase (Methanococcus maripaludis (strain C6 / ATCC BAA-1332)).